The primary structure comprises 163 residues: Transcriptional repressor NrdR (163 aa).

A zinc finger lies at 3 to 34 (CPFCAYADTRVVDSRLADDGGSVRRRRECPQC). In terms of domain architecture, ATP-cone spans 49–139 (PVVVKTDGRR…VYRRFEDVDA (91 aa)).

This sequence belongs to the NrdR family. The cofactor is Zn(2+).

Its function is as follows. Negatively regulates transcription of bacterial ribonucleotide reductase nrd genes and operons by binding to NrdR-boxes. This is Transcriptional repressor NrdR from Acidithiobacillus ferrooxidans (strain ATCC 23270 / DSM 14882 / CIP 104768 / NCIMB 8455) (Ferrobacillus ferrooxidans (strain ATCC 23270)).